The sequence spans 175 residues: Disulfide bond formation protein B 2 (175 aa).

The Cytoplasmic portion of the chain corresponds to Met1 to Leu9. The chain crosses the membrane as a helical span at residues Phe10–Tyr26. The Periplasmic portion of the chain corresponds to Leu27–Ala44. Residues Cys36 and Cys39 are joined by a disulfide bond. Residues Ala45–Pro61 traverse the membrane as a helical segment. Over Gly62–Arg68 the chain is Cytoplasmic. The chain crosses the membrane as a helical span at residues Tyr69–Gly85. At Thr86 to Glu142 the chain is on the periplasmic side. Residues Trp143–Ser161 traverse the membrane as a helical segment. The Cytoplasmic portion of the chain corresponds to Glu162–Tyr175.

This sequence belongs to the DsbB family.

It is found in the cell inner membrane. Functionally, required for disulfide bond formation in some periplasmic proteins. Acts by oxidizing the DsbA protein. This chain is Disulfide bond formation protein B 2, found in Pseudomonas syringae pv. syringae (strain B728a).